The primary structure comprises 124 residues: uncharacterized protein (124 aa).

This sequence belongs to the YciI family.

This is an uncharacterized protein from Rhizobium meliloti (strain 1021) (Ensifer meliloti).